Reading from the N-terminus, the 308-residue chain is E3 ubiquitin-protein ligase SINAT2 (308 aa).

The segment at 60-96 (CPVCTNLMYPPIHQCPNGHTLCSNCKLRVQNTCPTCR) adopts an RING-type zinc-finger fold. Positions 110–303 (VAESLEVPCR…QELKLRVTGR (194 aa)) are SBD. The SIAH-type zinc finger occupies 113 to 173 (SLEVPCRYQN…LVVHLKDDHK (61 aa)). Zn(2+) contacts are provided by cysteine 118, cysteine 125, histidine 137, cysteine 141, cysteine 148, cysteine 155, histidine 167, and histidine 172.

It belongs to the SINA (Seven in absentia) family. Interacts with RAP2-2. Interacts with SINAT6. Interacts with ATG6 and TRAF1A. Interacts with WAV3. Interacts with FREE1. Interacts with ELC/VPS23A.

It is found in the endosome. The protein localises to the multivesicular body. The protein resides in the cytoplasmic vesicle. It localises to the autophagosome. It catalyses the reaction S-ubiquitinyl-[E2 ubiquitin-conjugating enzyme]-L-cysteine + [acceptor protein]-L-lysine = [E2 ubiquitin-conjugating enzyme]-L-cysteine + N(6)-ubiquitinyl-[acceptor protein]-L-lysine.. The protein operates within protein modification; protein ubiquitination. E3 ubiquitin-protein ligase that mediates ubiquitination and subsequent proteasomal degradation of target proteins. E3 ubiquitin ligases accept ubiquitin from an E2 ubiquitin-conjugating enzyme in the form of a thioester and then directly transfers the ubiquitin to targeted substrates. It probably triggers the ubiquitin-mediated degradation of different substrates. Mediates the proteasomal-dependent degradation of ATG6, a component of the autophagosome complex. Requires TRAF1A/MUSE14 and TRAF1B/MUSE13 to target ATG6 for ubiquitination and subsequent regulation of autophagosome assembly. Modulates directly the ubiquitination and proteasomal-dependent degradation of FREE1, a component of the ESCRT-I complex. Modulates directly the ubiquitination and proteasomal-dependent degradation of ELC/VPS23A, a component of the ESCRT-I complex. The chain is E3 ubiquitin-protein ligase SINAT2 from Arabidopsis thaliana (Mouse-ear cress).